Here is a 397-residue protein sequence, read N- to C-terminus: Acetate kinase 2 (397 aa).

Position 10 (Asn-10) interacts with Mg(2+). Lys-17 contributes to the ATP binding site. Arg-90 contributes to the substrate binding site. Asp-147 (proton donor/acceptor) is an active-site residue. Residues 207–211 (HLGNG), 281–283 (DCR), and 329–333 (GIGEN) each bind ATP. Position 383 (Glu-383) interacts with Mg(2+).

The protein belongs to the acetokinase family. Homodimer. It depends on Mg(2+) as a cofactor. The cofactor is Mn(2+).

The protein resides in the cytoplasm. It catalyses the reaction acetate + ATP = acetyl phosphate + ADP. The protein operates within metabolic intermediate biosynthesis; acetyl-CoA biosynthesis; acetyl-CoA from acetate: step 1/2. Catalyzes the formation of acetyl phosphate from acetate and ATP. Can also catalyze the reverse reaction. In Photobacterium profundum (strain SS9), this protein is Acetate kinase 2.